The sequence spans 128 residues: Small ribosomal subunit protein bS6 (128 aa).

Residues 105–128 (AKVTEEEPVEAAPEAKVETTTEEE) form a disordered region. A compositionally biased stretch (basic and acidic residues) spans 117–128 (PEAKVETTTEEE).

This sequence belongs to the bacterial ribosomal protein bS6 family.

Functionally, binds together with bS18 to 16S ribosomal RNA. The protein is Small ribosomal subunit protein bS6 of Geotalea daltonii (strain DSM 22248 / JCM 15807 / FRC-32) (Geobacter daltonii).